A 65-amino-acid chain; its full sequence is Large ribosomal subunit protein bL35 (65 aa).

The interval Met1–Asn28 is disordered.

Belongs to the bacterial ribosomal protein bL35 family.

This is Large ribosomal subunit protein bL35 from Solidesulfovibrio magneticus (strain ATCC 700980 / DSM 13731 / RS-1) (Desulfovibrio magneticus).